The following is a 46-amino-acid chain: Mu-segestritoxin-Sf1b (46 aa).

4 cysteine pairs are disulfide-bonded: C3–C19, C10–C22, C18–C42, and C24–C40. The tract at residues 31-33 (RPW) is keys region for toxin activity.

It belongs to the neurotoxin 16 (SFI) family. In terms of tissue distribution, expressed by the venom gland.

Its subcellular location is the secreted. Insecticidal toxin. Causes flaccid paralysis followed by death when injected into Heliothis virescens larvae. Does not induce any toxic effects when injected intravenously into adult mice at a dose of 1.25 mg/kg body weight. The sequence is that of Mu-segestritoxin-Sf1b from Segestria florentina (Tube-web spider).